A 227-amino-acid polypeptide reads, in one-letter code: Cytochrome c oxidase subunit 2 (227 aa).

The Mitochondrial intermembrane portion of the chain corresponds to 1–14 (MAYPFQLGFQDAAS). A helical transmembrane segment spans residues 15 to 45 (PIMEELLHFHDHTLMIVFLISSLVLYIITLM). Residues 46-59 (LTTKLTHTSTMDAQ) are Mitochondrial matrix-facing. A helical transmembrane segment spans residues 60–87 (EVETVWTILPAIILILIALPSLRILYMM). At 88–227 (DEVNNPSLTV…VFEKWSVSML (140 aa)) the chain is on the mitochondrial intermembrane side. Cu cation-binding residues include His161, Cys196, Glu198, Cys200, His204, and Met207. Residue Glu198 participates in Mg(2+) binding.

This sequence belongs to the cytochrome c oxidase subunit 2 family. Component of the cytochrome c oxidase (complex IV, CIV), a multisubunit enzyme composed of 14 subunits. The complex is composed of a catalytic core of 3 subunits MT-CO1, MT-CO2 and MT-CO3, encoded in the mitochondrial DNA, and 11 supernumerary subunits COX4I, COX5A, COX5B, COX6A, COX6B, COX6C, COX7A, COX7B, COX7C, COX8 and NDUFA4, which are encoded in the nuclear genome. The complex exists as a monomer or a dimer and forms supercomplexes (SCs) in the inner mitochondrial membrane with NADH-ubiquinone oxidoreductase (complex I, CI) and ubiquinol-cytochrome c oxidoreductase (cytochrome b-c1 complex, complex III, CIII), resulting in different assemblies (supercomplex SCI(1)III(2)IV(1) and megacomplex MCI(2)III(2)IV(2)). Found in a complex with TMEM177, COA6, COX18, COX20, SCO1 and SCO2. Interacts with TMEM177 in a COX20-dependent manner. Interacts with COX20. Interacts with COX16. It depends on Cu cation as a cofactor.

The protein resides in the mitochondrion inner membrane. It carries out the reaction 4 Fe(II)-[cytochrome c] + O2 + 8 H(+)(in) = 4 Fe(III)-[cytochrome c] + 2 H2O + 4 H(+)(out). Its function is as follows. Component of the cytochrome c oxidase, the last enzyme in the mitochondrial electron transport chain which drives oxidative phosphorylation. The respiratory chain contains 3 multisubunit complexes succinate dehydrogenase (complex II, CII), ubiquinol-cytochrome c oxidoreductase (cytochrome b-c1 complex, complex III, CIII) and cytochrome c oxidase (complex IV, CIV), that cooperate to transfer electrons derived from NADH and succinate to molecular oxygen, creating an electrochemical gradient over the inner membrane that drives transmembrane transport and the ATP synthase. Cytochrome c oxidase is the component of the respiratory chain that catalyzes the reduction of oxygen to water. Electrons originating from reduced cytochrome c in the intermembrane space (IMS) are transferred via the dinuclear copper A center (CU(A)) of subunit 2 and heme A of subunit 1 to the active site in subunit 1, a binuclear center (BNC) formed by heme A3 and copper B (CU(B)). The BNC reduces molecular oxygen to 2 water molecules using 4 electrons from cytochrome c in the IMS and 4 protons from the mitochondrial matrix. In Balaenoptera physalus (Fin whale), this protein is Cytochrome c oxidase subunit 2 (MT-CO2).